Consider the following 152-residue polypeptide: 3-hydroxyacyl-[acyl-carrier-protein] dehydratase FabZ (152 aa).

The active site involves H57.

The protein belongs to the thioester dehydratase family. FabZ subfamily.

Its subcellular location is the cytoplasm. It carries out the reaction a (3R)-hydroxyacyl-[ACP] = a (2E)-enoyl-[ACP] + H2O. In terms of biological role, involved in unsaturated fatty acids biosynthesis. Catalyzes the dehydration of short chain beta-hydroxyacyl-ACPs and long chain saturated and unsaturated beta-hydroxyacyl-ACPs. In Xanthomonas axonopodis pv. citri (strain 306), this protein is 3-hydroxyacyl-[acyl-carrier-protein] dehydratase FabZ.